Consider the following 327-residue polypeptide: Lipoyl synthase (327 aa).

[4Fe-4S] cluster-binding residues include cysteine 66, cysteine 71, cysteine 77, cysteine 92, cysteine 96, cysteine 99, and serine 306. The Radical SAM core domain occupies 78–295 (FSKGTATFMI…EKEAYELGFS (218 aa)).

Belongs to the radical SAM superfamily. Lipoyl synthase family. [4Fe-4S] cluster serves as cofactor.

The protein resides in the cytoplasm. It carries out the reaction [[Fe-S] cluster scaffold protein carrying a second [4Fe-4S](2+) cluster] + N(6)-octanoyl-L-lysyl-[protein] + 2 oxidized [2Fe-2S]-[ferredoxin] + 2 S-adenosyl-L-methionine + 4 H(+) = [[Fe-S] cluster scaffold protein] + N(6)-[(R)-dihydrolipoyl]-L-lysyl-[protein] + 4 Fe(3+) + 2 hydrogen sulfide + 2 5'-deoxyadenosine + 2 L-methionine + 2 reduced [2Fe-2S]-[ferredoxin]. Its pathway is protein modification; protein lipoylation via endogenous pathway; protein N(6)-(lipoyl)lysine from octanoyl-[acyl-carrier-protein]: step 2/2. Its function is as follows. Catalyzes the radical-mediated insertion of two sulfur atoms into the C-6 and C-8 positions of the octanoyl moiety bound to the lipoyl domains of lipoate-dependent enzymes, thereby converting the octanoylated domains into lipoylated derivatives. The polypeptide is Lipoyl synthase (Neisseria meningitidis serogroup A / serotype 4A (strain DSM 15465 / Z2491)).